Reading from the N-terminus, the 109-residue chain is Large ribosomal subunit protein uL24 (109 aa).

Belongs to the universal ribosomal protein uL24 family. Part of the 50S ribosomal subunit.

Its function is as follows. One of two assembly initiator proteins, it binds directly to the 5'-end of the 23S rRNA, where it nucleates assembly of the 50S subunit. In terms of biological role, one of the proteins that surrounds the polypeptide exit tunnel on the outside of the subunit. This Syntrophotalea carbinolica (strain DSM 2380 / NBRC 103641 / GraBd1) (Pelobacter carbinolicus) protein is Large ribosomal subunit protein uL24.